Consider the following 542-residue polypeptide: Chaperonin GroEL (542 aa).

ATP contacts are provided by residues 29-32, Lys50, 86-90, Gly414, 477-479, and Asp493; these read TMGP, DGTTT, and NAA.

It belongs to the chaperonin (HSP60) family. In terms of assembly, forms a cylinder of 14 subunits composed of two heptameric rings stacked back-to-back. Interacts with the co-chaperonin GroES.

Its subcellular location is the cytoplasm. The catalysed reaction is ATP + H2O + a folded polypeptide = ADP + phosphate + an unfolded polypeptide.. In terms of biological role, together with its co-chaperonin GroES, plays an essential role in assisting protein folding. The GroEL-GroES system forms a nano-cage that allows encapsulation of the non-native substrate proteins and provides a physical environment optimized to promote and accelerate protein folding. The polypeptide is Chaperonin GroEL (Sulfurimonas denitrificans (strain ATCC 33889 / DSM 1251) (Thiomicrospira denitrificans (strain ATCC 33889 / DSM 1251))).